Here is a 146-residue protein sequence, read N- to C-terminus: Protein SprT-like (146 aa).

The 136-residue stretch at 6 to 141 (YVKTVSIEDF…GCGLCQGKLI (136 aa)) folds into the SprT-like domain. Position 64 (histidine 64) interacts with Zn(2+). Glutamate 65 is an active-site residue. Zn(2+) is bound at residue histidine 68.

This sequence belongs to the SprT family. The cofactor is Zn(2+).

The protein localises to the cytoplasm. The sequence is that of Protein SprT-like from Streptococcus thermophilus (strain CNRZ 1066).